The following is a 228-amino-acid chain: E3 ubiquitin-protein ligase RNF114 (228 aa).

An RING-type zinc finger spans residues 29–68 (CPVCLEVYEKPVQVPCGHVFCSACLQECLKPKKPVCGVCR). The Zn(2+) site is built by Cys91 and Cys94. The C2HC RNF-type zinc finger occupies 91-110 (CHGCRKNFFLSKIRSHVATC). Lys102 bears the N6-acetyllysine mark. Residues His106 and Cys110 each contribute to the Zn(2+) site. The residue at position 112 (Lys112) is an N6-acetyllysine.

In terms of assembly, interacts with XAF1, the interaction increases XAF1 stability and proapoptotic effects, and may regulate IFN signaling. Post-translationally, autoubiquitinated. Polyubiquitinated in the presence of E2 enzymes UBE2D1, UBE2D2 and UBE2D3, but only monoubiquitinated in the presence of UBE2E1. In terms of tissue distribution, expressed in numerous tissues, including skin, CD4 lymphocytes and dendritic cells. Highest levels in testis.

Its subcellular location is the cytoplasm. It is found in the nucleus. The catalysed reaction is S-ubiquitinyl-[E2 ubiquitin-conjugating enzyme]-L-cysteine + [acceptor protein]-L-lysine = [E2 ubiquitin-conjugating enzyme]-L-cysteine + N(6)-ubiquitinyl-[acceptor protein]-L-lysine.. It functions in the pathway protein modification; protein ubiquitination. Functionally, E3 ubiquitin-protein ligase that promotes the ubiquitination of various substrates. In turn, participates in the regulation of many biological processes including cell cycle, apoptosis, osteoclastogenesis as well as innate or adaptive immunity. Acts as a negative regulator of NF-kappa-B-dependent transcription by promoting the ubiquitination and stabilization of the NF-kappa-B inhibitor TNFAIP3. May promote the ubiquitination of TRAF6 as well. Also acts as a negative regulator of T-cell activation. Inhibits cellular dsRNA responses and interferon production by targeting MAVS component for proteasomal degradation. Ubiquitinates the CDK inhibitor CDKN1A leading to its degradationand probably also CDKN1B and CDKN1C. This activity stimulates cell cycle G1-to-S phase transition and suppresses cellular senescence. May play a role in spermatogenesis. The sequence is that of E3 ubiquitin-protein ligase RNF114 (RNF114) from Homo sapiens (Human).